The sequence spans 430 residues: Tektin-2 (430 aa).

2 coiled-coil regions span residues 81 to 162 (CLTD…FEKL) and 265 to 379 (FRKR…DIAC).

This sequence belongs to the tektin family. Microtubule inner protein component of sperm flagellar doublet microtubules. May interact with CCDC172. In terms of processing, tyrosine phosphorylated. Post-translationally, ubiquitinated, leading to its degradation. Deubiquitinated by USP16, promoting its stability. In terms of tissue distribution, expressed in trachea multiciliated cells.

It is found in the cytoplasm. The protein resides in the cytoskeleton. The protein localises to the cilium axoneme. Its subcellular location is the flagellum axoneme. It localises to the microtubule organizing center. Its function is as follows. Microtubule inner protein (MIP) part of the dynein-decorated doublet microtubules (DMTs) in cilia and flagellar axoneme. Plays a key role in the assembly or attachment of the inner dynein arm to microtubules in sperm flagella and tracheal cilia. Forms filamentous polymers in the walls of ciliary and flagellar microtubules. This chain is Tektin-2 (TEKT2), found in Bos taurus (Bovine).